A 256-amino-acid chain; its full sequence is Osteocalcin 2 (256 aa).

The signal sequence occupies residues 1–18; that stretch reads MKTLVLLSICALLSVCWS. A propeptide spanning residues 19 to 209 is cleaved from the precursor; it reads MGAVEPEVVV…LASVLLRRRR (191 aa). The span at 38–186 shows a compositional bias: low complexity; the sequence is AAPADPAAAA…SSSSSSSSES (149 aa). The interval 38–193 is disordered; that stretch reads AAPADPAAAA…SESASDEAAK (156 aa). The region spanning 218 to 252 is the Gla domain; it reads PLQLESLREVCELNIACDEMAETAGIVAAYVAYYG. Ca(2+) is bound by residues E222, E226, E229, and D235. 4-carboxyglutamate is present on residues E222, E226, and E229. Cysteines 228 and 234 form a disulfide. Position 236 is a 4-carboxyglutamate (E236).

The protein belongs to the osteocalcin/matrix Gla protein family. In terms of processing, gamma-carboxyglutamate residues are formed by vitamin K dependent carboxylation by GGCX. These residues are essential for the binding of calcium.

It is found in the secreted. Functionally, the carboxylated form is one of the main organic components of the bone matrix, which constitutes 1-2% of the total bone protein. The carboxylated form binds strongly to apatite and calcium. The chain is Osteocalcin 2 from Diplodus sargus (White seabream).